The following is a 794-amino-acid chain: Protein sel-1 homolog 1 (794 aa).

Positions 1–21 are cleaved as a signal peptide; it reads MQVHVGLTLLLCAVLLSSATA. The disordered stretch occupies residues 20-91; sequence TASSDDESNQ…EEEVSVGEEI (72 aa). The interval 22 to 737 is interaction with ERLEC1, OS9 and SYVN1; sequence SSDDESNQDE…DIFTQLDMDQ (716 aa). Residues 22 to 738 are Lumenal-facing; sequence SSDDESNQDE…IFTQLDMDQL (717 aa). 2 stretches are compositionally biased toward acidic residues: residues 23 to 32 and 62 to 77; these read SDDESNQDES and DSED…EEEE. Residue S63 is modified to Phosphoserine. Positions 122–170 constitute a Fibronectin type-II domain; that stretch reads AHGEPCHFPFLFLDKEYDECTSDGRQDGRLWCATTYDYKTDEKWGFCET. 2 cysteine pairs are disulfide-bonded: C127–C153 and C141–C168. Sel1-like repeat units follow at residues 183–218, 219–254, 255–290, 291–326, 373–409, 410–446, 447–482, 483–518, and 519–554; these read AEMI…GMNH, TKAL…EEGS, PKGQ…LGGN, LIAH…NHVA, VQAQ…NAGN, SHAM…DMGN, PVGQ…EQGW, VDGQ…QGGH, and ILAF…ERGR. Residues N195 and N217 are each glycosylated (N-linked (GlcNAc...) asparagine). The N-linked (GlcNAc...) asparagine glycan is linked to N272. The important for homodimerization and oligomerization stretch occupies residues 352–537; the sequence is NSGMLEEDLI…MHASGTGVMR (186 aa). An N-linked (GlcNAc...) asparagine glycan is attached at N431. A glycan (N-linked (GlcNAc...) asparagine) is linked at N608. Sel1-like repeat units follow at residues 627 to 662 and 664 to 699; these read TVAR…EQQH and AQAM…EASP. Positions 643–723 are interaction with SYVN1; that stretch reads TDVDYETAFI…VVYFLQYIRE (81 aa). The segment at 738 to 794 is mediates retention in the endoplasmic reticulum; that stretch reads LLGPEWDLYLMTIIALLLGTVIAYRQRQHQDVPVPRPPGPWPAPPQQEGPPEQQPPQ. Residues 739 to 759 traverse the membrane as a helical segment; the sequence is LGPEWDLYLMTIIALLLGTVI. At 760–794 the chain is on the cytoplasmic side; sequence AYRQRQHQDVPVPRPPGPWPAPPQQEGPPEQQPPQ. The interval 768–794 is disordered; the sequence is DVPVPRPPGPWPAPPQQEGPPEQQPPQ. Residues 771–794 are compositionally biased toward pro residues; it reads VPRPPGPWPAPPQQEGPPEQQPPQ.

It belongs to the sel-1 family. As to quaternary structure, homodimer and homooligomer. May form a complex with ERLEC1, HSPA5, OS9, and SYVN1. Interacts with FOXRED2 and EDEM1. Interacts with LPL and LMF1; may stabilize the complex formed by LPL and LMF1 and thereby promote the export of LPL dimers. Component of the HRD1 complex, which comprises at least SYNV1/HRD1, DERL1/2, FAM8A1, HERPUD1/HERP, OS9, SEL1L and UBE2J1. SYNV1 assembles with SEL1L and FAM8A1 through its transmembrane domains, but interaction with its cytoplasmic domain is required to confer stability to FAM8A1 and enhance recruitment of HERPUD1. The interaction with SYNV1/HRD1 is direct. Post-translationally, N-glycosylated.

Its subcellular location is the endoplasmic reticulum membrane. Its function is as follows. Plays a role in the endoplasmic reticulum quality control (ERQC) system also called ER-associated degradation (ERAD) involved in ubiquitin-dependent degradation of misfolded endoplasmic reticulum proteins. Enhances SYVN1 stability. Plays a role in LPL maturation and secretion. Required for normal differentiation of the pancreas epithelium, and for normal exocrine function and survival of pancreatic cells. May play a role in Notch signaling. This Mesocricetus auratus (Golden hamster) protein is Protein sel-1 homolog 1 (Sel1l).